The chain runs to 475 residues: Sensor histidine kinase GlrK (475 aa).

Residues 1–13 (MKRWPVFPRSLRQ) lie on the Cytoplasmic side of the membrane. Residues 14–34 (LVMLAFLLILLPLLVLAWQAW) form a helical membrane-spanning segment. Residues 35–173 (QSLNALSDQA…LQREIAERGQ (139 aa)) are Periplasmic-facing. The helical transmembrane segment at 174–194 (YFGWQSLVLFLVSLVMVLLFT) threads the bilayer. At 195 to 475 (RMIIGPVKNI…IELPSSKNTK (281 aa)) the chain is on the cytoplasmic side. In terms of domain architecture, Histidine kinase spans 256 to 472 (HLSHELKTPL…CFRIELPSSK (217 aa)). The residue at position 259 (histidine 259) is a Phosphohistidine; by autocatalysis.

Autophosphorylated.

It localises to the cell inner membrane. It catalyses the reaction ATP + protein L-histidine = ADP + protein N-phospho-L-histidine.. In terms of biological role, member of the two-component regulatory system GlrR/GlrK that up-regulates transcription of the glmY sRNA when cells enter the stationary growth phase. Activates GlrR by phosphorylation. In Escherichia coli (strain K12), this protein is Sensor histidine kinase GlrK (glrK).